Here is a 410-residue protein sequence, read N- to C-terminus: Magnesium transporter NIPA3 (410 aa).

Topologically, residues 1-67 (MGAQVRLPPG…ISANVENKYS (67 aa)) are extracellular. 4 N-linked (GlcNAc...) asparagine glycosylation sites follow: asparagine 25, asparagine 35, asparagine 50, and asparagine 55. Residues 68 to 88 (LYVGLVLAVSSSIFIGSSFIL) form a helical membrane-spanning segment. At 89–114 (KKKGLLQLASKGFTRAGQGGHSYLKE) the chain is on the cytoplasmic side. The helical transmembrane segment at 115 to 135 (WLWWVGLLSMGAGEAANFAAY) threads the bilayer. Residue alanine 136 is a topological domain, extracellular. A helical transmembrane segment spans residues 137–157 (FAPATLVTPLGALSVLISAIL). The Cytoplasmic portion of the chain corresponds to 158-165 (SSYFLNEH). The chain crosses the membrane as a helical span at residues 166 to 186 (LNIHGKIGCILSILGSTVMVI). Topologically, residues 187 to 207 (HAPQEEEVTSLHEMEMKLRDP) are extracellular. Residues 208-228 (GFISFAVIITVISLVLILIVA) form a helical membrane-spanning segment. At 229–233 (PKKGQ) the chain is on the cytoplasmic side. Residues 234–254 (TNILVYISICSLIGAFSVSSV) traverse the membrane as a helical segment. Topologically, residues 255-273 (KGLGIAIKELIEWKPVYKH) are extracellular. A helical transmembrane segment spans residues 274-294 (PLVFVLLAVLVLSVTTQINYL). Topologically, residues 295–305 (NKALDTFNTSL) are cytoplasmic. The helical transmembrane segment at 306–326 (VTPIYYVFFTSMVVTCSAILF) threads the bilayer. Residues 327–336 (QEWYGMTAGD) are Extracellular-facing. The helical transmembrane segment at 337-357 (IIGTLSGFFTIIIGIFLLHAF) threads the bilayer. At 358-410 (KNTDITWSELTSTAKKEAVSLNVNENNYVLLENLECSAPGYNDDVTLFSRTDD) the chain is on the cytoplasmic side.

Belongs to the NIPA family. Expressed in the pancreatic islets.

It is found in the golgi apparatus membrane. It catalyses the reaction Mg(2+)(in) = Mg(2+)(out). In terms of biological role, acts as a Mg(2+) transporter. Can also transport other divalent cations such as Fe(2+), Sr(2+), Ba(2+), Mn(2+), Cu(2+) and Co(2+) but to a much less extent than Mg(2+). The chain is Magnesium transporter NIPA3 (NIPAL1) from Homo sapiens (Human).